We begin with the raw amino-acid sequence, 210 residues long: 2-dehydro-3-deoxy-phosphogluconate aldolase (210 aa).

Catalysis depends on Glu-41, which acts as the Proton acceptor. Residues Arg-45, Thr-69, and Lys-129 each contribute to the pyruvate site. Lys-129 (schiff-base intermediate with substrate) is an active-site residue.

The protein belongs to the KHG/KDPG aldolase family. In terms of assembly, homotrimer.

The protein resides in the cytoplasm. It catalyses the reaction 2-dehydro-3-deoxy-6-phospho-D-gluconate = D-glyceraldehyde 3-phosphate + pyruvate. The protein operates within carbohydrate acid metabolism; 2-dehydro-3-deoxy-D-gluconate degradation; D-glyceraldehyde 3-phosphate and pyruvate from 2-dehydro-3-deoxy-D-gluconate: step 2/2. In terms of biological role, catalyzes the reversible, stereospecific retro-aldol cleavage of 2-keto-3-deoxy-6-phosphogluconate (KDPG) to pyruvate and D-glyceraldehyde-3-phosphate. This chain is 2-dehydro-3-deoxy-phosphogluconate aldolase (eda), found in Treponema pallidum (strain Nichols).